The following is a 361-amino-acid chain: Probable sugar phosphate/phosphate translocator At1g12500 (361 aa).

Val2 carries the post-translational modification N-acetylvaline. A run of 9 helical transmembrane segments spans residues Thr56 to Leu76, Ile90 to Ile110, Phe125 to Ser145, Phe153 to Thr173, Ile192 to Ala212, Leu240 to Glu260, Leu276 to Phe296, Thr306 to Phe326, and Pro329 to Ser349. Positions Pro89–Ser196 constitute an EamA domain.

This sequence belongs to the TPT transporter family. TPT (TC 2.A.7.9) subfamily.

It is found in the membrane. This Arabidopsis thaliana (Mouse-ear cress) protein is Probable sugar phosphate/phosphate translocator At1g12500.